The chain runs to 226 residues: ATP-dependent dethiobiotin synthetase BioD (226 aa).

13–18 (DVGKTL) lines the ATP pocket. T17 contacts Mg(2+). The active site involves K38. ATP contacts are provided by residues D55, 117 to 120 (EGAG), 177 to 178 (NR), 206 to 208 (PFV), and E213. The Mg(2+) site is built by D55 and E117.

The protein belongs to the dethiobiotin synthetase family. As to quaternary structure, homodimer. Requires Mg(2+) as cofactor.

It localises to the cytoplasm. It catalyses the reaction (7R,8S)-7,8-diammoniononanoate + CO2 + ATP = (4R,5S)-dethiobiotin + ADP + phosphate + 3 H(+). It participates in cofactor biosynthesis; biotin biosynthesis; biotin from 7,8-diaminononanoate: step 1/2. In terms of biological role, catalyzes a mechanistically unusual reaction, the ATP-dependent insertion of CO2 between the N7 and N8 nitrogen atoms of 7,8-diaminopelargonic acid (DAPA, also called 7,8-diammoniononanoate) to form a ureido ring. The polypeptide is ATP-dependent dethiobiotin synthetase BioD (Aeromonas hydrophila subsp. hydrophila (strain ATCC 7966 / DSM 30187 / BCRC 13018 / CCUG 14551 / JCM 1027 / KCTC 2358 / NCIMB 9240 / NCTC 8049)).